A 158-amino-acid chain; its full sequence is uncharacterized protein (158 aa).

Transmembrane regions (helical) follow at residues 10 to 30 (LSSL…QFIV) and 137 to 157 (IEVF…AYFF).

The protein resides in the cell membrane. This is an uncharacterized protein from Bacillus subtilis (strain 168).